Here is an 88-residue protein sequence, read N- to C-terminus: UPF0250 protein Swoo_3713 (88 aa).

The protein belongs to the UPF0250 family.

The polypeptide is UPF0250 protein Swoo_3713 (Shewanella woodyi (strain ATCC 51908 / MS32)).